Reading from the N-terminus, the 676-residue chain is Envelope glycoprotein (676 aa).

The signal sequence occupies residues 1–34; sequence MACSTLSKSPKDKIDPRDLLIPLILFLSLKGARS. The segment at 35–270 is receptor-binding domain (RBD); sequence AAPGSSPHQV…SYQNLGPRIP (236 aa). Residues 35–620 are Extracellular-facing; the sequence is AAPGSSPHQV…FNRSPWFTTL (586 aa). Asn46 is a glycosylation site (N-linked (GlcNAc...) asparagine; by host). 5 disulfides stabilise this stretch: Cys80/Cys132, Cys106/Cys121, Cys107/Cys117, Cys155/Cys175, and Cys167/Cys180. Residue His89 participates in Zn(2+) binding. Asp120 contacts Zn(2+). Asn202 carries an N-linked (GlcNAc...) asparagine; by host glycan. Cys212 and Cys218 are oxidised to a cystine. A disordered region spans residues 287–321; the sequence is NPLPKPAKSPPASSSTPTLISPSPTPTQPPPAGTG. A compositionally biased stretch (low complexity) spans 296–308; the sequence is PPASSSTPTLISP. Pro residues predominate over residues 309 to 318; that stretch reads SPTPTQPPPA. N-linked (GlcNAc...) asparagine; by host glycosylation is present at Asn336. 6 cysteine pairs are disulfide-bonded: Cys346–Cys349, Cys346–Cys573, Cys376–Cys430, Cys395–Cys407, Cys437–Cys450, and Cys565–Cys572. A CXXC motif is present at residues 346-349; it reads CWLC. Residues Asn368 and Asn375 are each glycosylated (N-linked (GlcNAc...) asparagine; by host). Residues Asn408 and Asn444 are each glycosylated (N-linked (GlcNAc...) asparagine; by host). Residues 482–502 form a fusion peptide region; it reads VSLTLALLLGGLTMGGIAAGV. A coiled-coil region spans residues 513–547; that stretch reads QQFQQLHAAVQDDLKEVEKSITNLEKSLTSLSEVV. An immunosuppression region spans residues 548-564; the sequence is LQNRRGLDLLFLKEGGL. The CX6CC motif lies at 565-573; it reads CAALKEECC. The helical transmembrane segment at 621–641 threads the bilayer; the sequence is ISTIMGPLIILLLILLFGPCI. Cys640 is lipidated: S-palmitoyl cysteine; by host. The Cytoplasmic portion of the chain corresponds to 642 to 676; sequence LNRLVQFVKDRISVVQALVLTQQYHQLKPLEYEPQ. Positions 665–668 match the YXXL motif; contains endocytosis signal motif; it reads YHQL.

As to quaternary structure, the mature envelope protein (Env) consists of a trimer of SU-TM heterodimers attached by a labile interchain disulfide bond. Post-translationally, specific enzymatic cleavages in vivo yield mature proteins. Envelope glycoproteins are synthesized as an inactive precursor that is N-glycosylated and processed likely by host cell furin or by a furin-like protease in the Golgi to yield the mature SU and TM proteins. The cleavage site between SU and TM requires the minimal sequence [KR]-X-[KR]-R. The R-peptide is released from the C-terminus of the cytoplasmic tail of the TM protein upon particle formation as a result of proteolytic cleavage by the viral protease. Cleavage of this peptide is required for TM to become fusogenic. In terms of processing, the CXXC motif is highly conserved across a broad range of retroviral envelope proteins. It is thought to participate in the formation of a labile disulfide bond possibly with the CX6CC motif present in the transmembrane protein. Isomerization of the intersubunit disulfide bond to an SU intrachain disulfide bond is thought to occur upon receptor recognition in order to allow membrane fusion. The transmembrane protein is palmitoylated. Post-translationally, the R-peptide is palmitoylated.

The protein resides in the virion membrane. It is found in the host cell membrane. In terms of biological role, the surface protein (SU) attaches the virus to the host cell by binding to its receptor. This interaction triggers the refolding of the transmembrane protein (TM) and is thought to activate its fusogenic potential by unmasking its fusion peptide. Fusion occurs at the host cell plasma membrane. The transmembrane protein (TM) acts as a class I viral fusion protein. Under the current model, the protein has at least 3 conformational states: pre-fusion native state, pre-hairpin intermediate state, and post-fusion hairpin state. During viral and target cell membrane fusion, the coiled coil regions (heptad repeats) assume a trimer-of-hairpins structure, positioning the fusion peptide in close proximity to the C-terminal region of the ectodomain. The formation of this structure appears to drive apposition and subsequent fusion of viral and target cell membranes. Membranes fusion leads to delivery of the nucleocapsid into the cytoplasm. This chain is Envelope glycoprotein (env), found in Friend murine leukemia virus (isolate FB29) (FrMLV).